Here is a 517-residue protein sequence, read N- to C-terminus: 2,3-bisphosphoglycerate-independent phosphoglycerate mutase (517 aa).

Mn(2+) is bound by residues Asp12 and Ser62. Ser62 functions as the Phosphoserine intermediate in the catalytic mechanism. Residues His123, 153–154 (RD), Arg185, Arg191, 261–264 (RSDR), and Lys336 each bind substrate. Residues Asp403, His407, Asp444, His445, and His463 each contribute to the Mn(2+) site.

It belongs to the BPG-independent phosphoglycerate mutase family. As to quaternary structure, monomer. It depends on Mn(2+) as a cofactor.

The enzyme catalyses (2R)-2-phosphoglycerate = (2R)-3-phosphoglycerate. It functions in the pathway carbohydrate degradation; glycolysis; pyruvate from D-glyceraldehyde 3-phosphate: step 3/5. In terms of biological role, catalyzes the interconversion of 2-phosphoglycerate and 3-phosphoglycerate. The chain is 2,3-bisphosphoglycerate-independent phosphoglycerate mutase from Methylobacillus flagellatus (strain ATCC 51484 / DSM 6875 / VKM B-1610 / KT).